The chain runs to 102 residues: Urease subunit beta (102 aa).

Belongs to the urease beta subunit family. As to quaternary structure, heterotrimer of UreA (gamma), UreB (beta) and UreC (alpha) subunits. Three heterotrimers associate to form the active enzyme.

It is found in the cytoplasm. The catalysed reaction is urea + 2 H2O + H(+) = hydrogencarbonate + 2 NH4(+). The protein operates within nitrogen metabolism; urea degradation; CO(2) and NH(3) from urea (urease route): step 1/1. In Bordetella pertussis (strain Tohama I / ATCC BAA-589 / NCTC 13251), this protein is Urease subunit beta.